The following is a 728-amino-acid chain: Myb-related protein A (728 aa).

Residues 1 to 31 are disordered; that stretch reads MAGRARSEDEEEDGQFTEHDYDVSLQKGPKK. HTH myb-type domains are found at residues 30–80, 81–136, and 137–187; these read KKPW…HKVL, SPEL…NPDV, and KKSS…KRKV. 3 DNA-binding regions (H-T-H motif) span residues 57–80, 109–132, and 160–183; these read WGVV…HKVL, WSII…HNHL, and WAEI…NSTM. The transcriptional activation domain stretch occupies residues 230-293; sequence IPRYSSLSHD…RKRVPSGSSL (64 aa). The tract at residues 296 to 534 is negative regulatory domain; sequence SESYHMGESM…IRRSLMAVTP (239 aa).

Component of the DREAM complex.

It localises to the nucleus. In terms of biological role, transcription factor that specifically recognizes the sequence 5'-YAAC[GT]G-3'. Acts as a master regulator of male meiosis by promoting expression of piRNAs. The piRNA metabolic process mediates the repression of transposable elements during meiosis by forming complexes composed of piRNAs and Piwi proteins and governs the methylation and subsequent repression of transposons, which is essential for the germline integrity. The polypeptide is Myb-related protein A (mybl1) (Xenopus laevis (African clawed frog)).